Consider the following 336-residue polypeptide: MNKYNLVLLCGGGGSEHDISLLSAKYFESCLATLPRFNTLWLELTAEGQFRTREGEIVELTNRREIRFADEAKAPWSVDYVIPCIHGYPGETGDIQSWFNLIRLPYFGCGSEASSNCFNKITAKMWFSALGIPNTPYLYLDEPSNDAIARVEAAFDEWGSVFIKAASQGSSVGCFPAHRREDIPGLVRKAFEYAPFVVVEKTIKARELEVAVYDYQGEIVATRPGEIVCAANTFYSFEEKYDTKSQAVTHVEAPDVDEETVAAIRDYALRAFKGMKLRHLSRIDFFLTEDNQILLNEINTFPGLTQISMFPKMLAHHGHDFATFLEQAILAELEGR.

An ATP-grasp domain is found at 124–330; sequence KMWFSALGIP…FATFLEQAIL (207 aa). ATP is bound at residue 154–209; sequence AFDEWGSVFIKAASQGSSVGCFPAHRREDIPGLVRKAFEYAPFVVVEKTIKARELE. D284, E297, and N299 together coordinate Mg(2+).

Belongs to the D-alanine--D-alanine ligase family. The cofactor is Mg(2+). Mn(2+) serves as cofactor.

It localises to the cytoplasm. It carries out the reaction 2 D-alanine + ATP = D-alanyl-D-alanine + ADP + phosphate + H(+). The protein operates within cell wall biogenesis; peptidoglycan biosynthesis. In terms of biological role, cell wall formation. The chain is D-alanine--D-alanine ligase from Shewanella amazonensis (strain ATCC BAA-1098 / SB2B).